The following is a 329-amino-acid chain: Beta-ketoacyl-[acyl-carrier-protein] synthase III (329 aa).

Residues cysteine 114 and histidine 254 contribute to the active site. The ACP-binding stretch occupies residues 255 to 259 (QANLR). Residue asparagine 284 is part of the active site.

The protein belongs to the thiolase-like superfamily. FabH family. Homodimer.

It is found in the cytoplasm. It carries out the reaction malonyl-[ACP] + acetyl-CoA + H(+) = 3-oxobutanoyl-[ACP] + CO2 + CoA. It functions in the pathway lipid metabolism; fatty acid biosynthesis. Functionally, catalyzes the condensation reaction of fatty acid synthesis by the addition to an acyl acceptor of two carbons from malonyl-ACP. Catalyzes the first condensation reaction which initiates fatty acid synthesis and may therefore play a role in governing the total rate of fatty acid production. Possesses both acetoacetyl-ACP synthase and acetyl transacylase activities. Its substrate specificity determines the biosynthesis of branched-chain and/or straight-chain of fatty acids. The polypeptide is Beta-ketoacyl-[acyl-carrier-protein] synthase III (Roseiflexus sp. (strain RS-1)).